The following is a 229-amino-acid chain: Enolase-phosphatase E1 (229 aa).

The segment covering 208–218 (DTQSTHRQVSS) has biased composition (polar residues). The segment at 208–229 (DTQSTHRQVSSFDDIHPEQIPT) is disordered. Positions 220 to 229 (DDIHPEQIPT) are enriched in basic and acidic residues.

Belongs to the HAD-like hydrolase superfamily. MasA/MtnC family. Monomer. It depends on Mg(2+) as a cofactor.

The enzyme catalyses 5-methylsulfanyl-2,3-dioxopentyl phosphate + H2O = 1,2-dihydroxy-5-(methylsulfanyl)pent-1-en-3-one + phosphate. It participates in amino-acid biosynthesis; L-methionine biosynthesis via salvage pathway; L-methionine from S-methyl-5-thio-alpha-D-ribose 1-phosphate: step 3/6. Its pathway is amino-acid biosynthesis; L-methionine biosynthesis via salvage pathway; L-methionine from S-methyl-5-thio-alpha-D-ribose 1-phosphate: step 4/6. Functionally, bifunctional enzyme that catalyzes the enolization of 2,3-diketo-5-methylthiopentyl-1-phosphate (DK-MTP-1-P) into the intermediate 2-hydroxy-3-keto-5-methylthiopentenyl-1-phosphate (HK-MTPenyl-1-P), which is then dephosphorylated to form the acireductone 1,2-dihydroxy-3-keto-5-methylthiopentene (DHK-MTPene). This is Enolase-phosphatase E1 from Cronobacter sakazakii (Enterobacter sakazakii).